Consider the following 369-residue polypeptide: Maltose/maltodextrin import ATP-binding protein MalK (369 aa).

The 231-residue stretch at 4–234 (VTLHNVSKAY…PVNRFVASFI (231 aa)) folds into the ABC transporter domain. Residue 36–43 (GPSGCGKS) participates in ATP binding.

The protein belongs to the ABC transporter superfamily. Maltooligosaccharide importer (TC 3.A.1.1.1) family. The complex is composed of two ATP-binding proteins (MalK), two transmembrane proteins (MalG and MalK) and a solute-binding protein (MalE).

It localises to the cell inner membrane. The enzyme catalyses D-maltose(out) + ATP + H2O = D-maltose(in) + ADP + phosphate + H(+). Part of the ABC transporter complex MalEFGK involved in maltose/maltodextrin import. Responsible for energy coupling to the transport system. In Photorhabdus laumondii subsp. laumondii (strain DSM 15139 / CIP 105565 / TT01) (Photorhabdus luminescens subsp. laumondii), this protein is Maltose/maltodextrin import ATP-binding protein MalK.